The primary structure comprises 233 residues: RNA-free ribonuclease P (233 aa).

This sequence belongs to the HARP family.

It catalyses the reaction Endonucleolytic cleavage of RNA, removing 5'-extranucleotides from tRNA precursor.. Functionally, RNA-free RNase P that catalyzes the removal of the 5'-leader sequence from pre-tRNA to produce the mature 5'-terminus. The chain is RNA-free ribonuclease P from Methanocaldococcus jannaschii (strain ATCC 43067 / DSM 2661 / JAL-1 / JCM 10045 / NBRC 100440) (Methanococcus jannaschii).